We begin with the raw amino-acid sequence, 293 residues long: Cytochrome c biogenesis protein CcsA (293 aa).

Helical transmembrane passes span isoleucine 12–threonine 32, valine 39–leucine 59, leucine 78–isoleucine 98, glycine 99–proline 119, valine 142–isoleucine 162, phenylalanine 216–asparagine 236, threonine 250–isoleucine 267, and lysine 273–glutamate 293.

It belongs to the CcmF/CycK/Ccl1/NrfE/CcsA family. As to quaternary structure, may interact with Ccs1.

The protein localises to the plastid. The protein resides in the chloroplast thylakoid membrane. Required during biogenesis of c-type cytochromes (cytochrome c6 and cytochrome f) at the step of heme attachment. The chain is Cytochrome c biogenesis protein CcsA from Cyanidium caldarium (Red alga).